A 543-amino-acid polypeptide reads, in one-letter code: Carboxypeptidase Y homolog A (543 aa).

The first 17 residues, 1-17, serve as a signal peptide directing secretion; sequence MKVATSALLVGAVSASV. A propeptide spanning residues 18–128 is cleaved from the precursor; the sequence is GPQQQVLKFP…KLENYSMRTK (111 aa). N122 and N213 each carry an N-linked (GlcNAc...) asparagine glycan. Cystine bridges form between C182-C421, C316-C330, C340-C363, C347-C356, and C385-C391. The active site involves S269. D460 is an active-site residue. N-linked (GlcNAc...) asparagine glycosylation is present at N508. H519 is an active-site residue.

It belongs to the peptidase S10 family.

It localises to the vacuole. It carries out the reaction Release of a C-terminal amino acid with broad specificity.. Functionally, vacuolar carboxypeptidase involved in degradation of small peptides. Digests preferentially peptides containing an aliphatic or hydrophobic residue in P1' position, as well as methionine, leucine or phenylalanine in P1 position of ester substrate. The protein is Carboxypeptidase Y homolog A (CPYA) of Leptosphaeria maculans (strain JN3 / isolate v23.1.3 / race Av1-4-5-6-7-8) (Blackleg fungus).